Consider the following 161-residue polypeptide: Ribonuclease P protein component (161 aa).

This sequence belongs to the RnpA family. In terms of assembly, consists of a catalytic RNA component (M1 or rnpB) and a protein subunit.

It carries out the reaction Endonucleolytic cleavage of RNA, removing 5'-extranucleotides from tRNA precursor.. Functionally, RNaseP catalyzes the removal of the 5'-leader sequence from pre-tRNA to produce the mature 5'-terminus. It can also cleave other RNA substrates such as 4.5S RNA. The protein component plays an auxiliary but essential role in vivo by binding to the 5'-leader sequence and broadening the substrate specificity of the ribozyme. The protein is Ribonuclease P protein component of Helicobacter pylori (strain Shi470).